The primary structure comprises 557 residues: MFS-type transporter clz4 (557 aa).

14 helical membrane-spanning segments follow: residues 22–42 (LIIV…DHNG), 59–79 (SITW…VLYG), 89–109 (ALFV…GFAT), 120–140 (LTGA…TDVV), 150–170 (AVVA…AAGV), 179–199 (GLFW…GYIL), 217–237 (WLGS…VSGP), 245–265 (SLLV…FLFI), 269–289 (LATL…SALL), 319–339 (VISG…SMIA), 346–366 (SGQY…GSLL), 379–399 (VIIV…PMVI), 419–439 (FFRF…LQST), and 479–499 (HVYI…FVWK). Residues 505–523 (SRPTENNDDIEHAPARGIE) are compositionally biased toward basic and acidic residues. The interval 505 to 557 (SRPTENNDDIEHAPARGIEREDEQSSLIYDREPSAVSYGTVEAGEPNRLRRGG) is disordered.

Belongs to the major facilitator superfamily. TCR/Tet family.

It localises to the membrane. Functionally, MFS-type transporter; part of the gene cluster that mediates the biosynthesis of squalestatin S1 (SQS1, also known as zaragozic acid A), a heavily oxidized fungal polyketide that offers potent cholesterol lowering activity by targeting squalene synthase (SS). The polypeptide is MFS-type transporter clz4 (Cochliobolus lunatus (Filamentous fungus)).